Reading from the N-terminus, the 72-residue chain is Translation initiation factor IF-1 (72 aa).

The 72-residue stretch at 1–72 (MIKEDNIEMH…SKGRIIFRSR (72 aa)) folds into the S1-like domain.

This sequence belongs to the IF-1 family. In terms of assembly, component of the 30S ribosomal translation pre-initiation complex which assembles on the 30S ribosome in the order IF-2 and IF-3, IF-1 and N-formylmethionyl-tRNA(fMet); mRNA recruitment can occur at any time during PIC assembly.

It is found in the cytoplasm. In terms of biological role, one of the essential components for the initiation of protein synthesis. Stabilizes the binding of IF-2 and IF-3 on the 30S subunit to which N-formylmethionyl-tRNA(fMet) subsequently binds. Helps modulate mRNA selection, yielding the 30S pre-initiation complex (PIC). Upon addition of the 50S ribosomal subunit IF-1, IF-2 and IF-3 are released leaving the mature 70S translation initiation complex. This chain is Translation initiation factor IF-1, found in Blochmanniella floridana.